A 916-amino-acid chain; its full sequence is Probable serine/threonine-protein kinase DDB_G0267514 (916 aa).

3 disordered regions span residues 283 to 311, 461 to 518, and 550 to 646; these read SGGG…SGGS, NNNQ…SPLD, and FNNQ…EPPS. Low complexity-rich tracts occupy residues 461 to 493 and 550 to 622; these read NNNQ…QQQP and FNNQ…LINN. Over residues 623–646 the composition is skewed to polar residues; sequence HSPNQYNNQGNILKNSGSVVEPPS. Residues 662-916 enclose the Protein kinase domain; it reads LKISSKLGEG…EILNLLNEIP (255 aa). Residues 668-676 and Lys-689 contribute to the ATP site; that span reads LGEGTFGVV. Asp-784 serves as the catalytic Proton acceptor.

Belongs to the protein kinase superfamily. TKL Ser/Thr protein kinase family.

The catalysed reaction is L-seryl-[protein] + ATP = O-phospho-L-seryl-[protein] + ADP + H(+). The enzyme catalyses L-threonyl-[protein] + ATP = O-phospho-L-threonyl-[protein] + ADP + H(+). This is Probable serine/threonine-protein kinase DDB_G0267514 from Dictyostelium discoideum (Social amoeba).